A 268-amino-acid polypeptide reads, in one-letter code: MSAFSEAALERKLSELSNSQQSVQTLSLWLIHHRKHSALIVSVWERELRKAKPNRKLTFLYLANDVIQNSKRKGPEFTKDFAPVIVEAFKHVSSESDESCKKHPGRVLSIWEERSVYENDVLEQLRQALYGDRKVRKRTYEQIKVDENNCSPRSSPTDPPQTMDLIRALQELENAASGDAAVHQRIASLPIEVQDVSLLDRITDKESGEQLSKMVDDACMLLADYNGRLAAEIDDRKQLTRMLSDFLRCQKEFLAEKEHKLEVRIVLF.

Residues 1-133 (MSAFSEAALE…QLRQALYGDR (133 aa)) form the CID domain.

Belongs to the UPF0400 (RTT103) family. In terms of assembly, may form a heterodimer with RPRD1B. Associates with the RNA polymerase II subunit POLR2A (via CTD phosphorylated at 'Ser-2' and 'Ser-7' of the heptad repeats).

It localises to the nucleus. Its function is as follows. Interacts with phosphorylated C-terminal heptapeptide repeat domain (CTD) of the largest RNA polymerase II subunit POLR2A, and participates in dephosphorylation of the CTD by RPAP2. May act as a negative regulator of cyclin-D1 (CCND1) and cyclin-E (CCNE1) in the cell cycle. This Gallus gallus (Chicken) protein is Regulation of nuclear pre-mRNA domain-containing protein 1A (RPRD1A).